The following is a 207-amino-acid chain: dTTP/UTP pyrophosphatase (207 aa).

D87 acts as the Proton acceptor in catalysis.

This sequence belongs to the Maf family. YhdE subfamily. A divalent metal cation serves as cofactor.

Its subcellular location is the cytoplasm. The enzyme catalyses dTTP + H2O = dTMP + diphosphate + H(+). It carries out the reaction UTP + H2O = UMP + diphosphate + H(+). Functionally, nucleoside triphosphate pyrophosphatase that hydrolyzes dTTP and UTP. May have a dual role in cell division arrest and in preventing the incorporation of modified nucleotides into cellular nucleic acids. In Nitrosomonas europaea (strain ATCC 19718 / CIP 103999 / KCTC 2705 / NBRC 14298), this protein is dTTP/UTP pyrophosphatase.